A 129-amino-acid polypeptide reads, in one-letter code: MYHSFNIAVIIPCYNEQKAIAKVINDFKTNIPTASIYVFDNNSTDSTAQVAEDAGATVHSVPLKGKGNVVRRMFSDVDADIYLMVDGDDTYDASSAPEMINHLIKNQLDMVVGCRQENGDQNTYRKGHR.

Belongs to the glycosyltransferase 2 family.

It participates in bacterial outer membrane biogenesis; lipopolysaccharide biosynthesis. This chain is Protein RfbJ (rfbJ), found in Shigella flexneri.